The following is a 464-amino-acid chain: CRISPR system endoribonuclease Csm6 (464 aa).

Residues 1 to 190 (MEDLDALWER…LRILPNPHEA (190 aa)) are CARF domain. The tract at residues 191-464 (LAEVDALFAK…LSPEPVPLGF (274 aa)) is HEPN domain.

It belongs to the CRISPR-associated Csm6 family. Homodimer. The protein forms a twisted, head-to-head dimer; the composite ssRNase active site is formed at the dimer interface. The cofactor is Does not require a metal cofactor..

Non-specific ssRNase activity is allosterically activated about 1000-fold by cyclic tetraadenylate (cA4), which probably binds to its CARF domain. CRISPR (clustered regularly interspaced short palindromic repeat) is an adaptive immune system that provides protection against mobile genetic elements (viruses, transposable elements and conjugative plasmids). CRISPR clusters contain spacers, sequences complementary to antecedent mobile elements, and target invading nucleic acids. CRISPR clusters are transcribed and processed into CRISPR RNA (crRNA). The type III-A Csm effector complex binds crRNA and acts as a crRNA-guided RNase, DNase and cyclic oligoadenylate synthase; binding of target RNA cognate to the crRNA is required for all activities. This protein is not part of the Csm effector complex. Its function is as follows. A single-strand-specific endoribonuclease (ssRNase) producing free 5'-OH. Activity is approximately 1000-fold stimulated by cyclic oligoadenylate (cOA); only cyclic tetraadenylate (cA4) stimulates the ssRNase activity while linear oligoadenylates do not activate the RNase. Another study showed stimulation by linear tetraadenylate at very high concentrations, but did not examine stimulation by cA4. This chain is CRISPR system endoribonuclease Csm6, found in Thermus thermophilus (strain ATCC 27634 / DSM 579 / HB8).